Reading from the N-terminus, the 99-residue chain is Single insulin-like growth factor-binding domain protein-2 (99 aa).

A signal peptide spans 1-18; it reads MESLFIFAFGMMLSSASA. Residues 19–98 enclose the IGFBP N-terminal domain; the sequence is LSCIPCVPEE…GQEVGRCRKK (80 aa). Ser-20 is a glycosylation site (O-linked (GalNAc...) serine). Intrachain disulfides connect Cys-21–Cys-44, Cys-24–Cys-46, Cys-29–Cys-47, Cys-35–Cys-50, Cys-58–Cys-74, and Cys-68–Cys-95.

In terms of tissue distribution, expressed in hemocytes.

Its subcellular location is the secreted. In terms of biological role, has a role in the innate immune system. The sequence is that of Single insulin-like growth factor-binding domain protein-2 from Cupiennius salei (American wandering spider).